Here is a 549-residue protein sequence, read N- to C-terminus: Eukaryotic translation initiation factor 3 subunit D (549 aa).

Residues 101–130 (QSYQRGRARGQRGRGARGARTPGGMTTLNK) form a disordered region. Over residues 106–117 (GRARGQRGRGAR) the composition is skewed to basic residues. The tract at residues 277–291 (EFDLLTVNETSVEPP) is RNA gate. The interval 521-549 (ESDASEESGDEQADTPFAPLYSYGNSKRV) is disordered. Residues 523–533 (DASEESGDEQA) show a composition bias toward acidic residues.

Belongs to the eIF-3 subunit D family. As to quaternary structure, component of the eukaryotic translation initiation factor 3 (eIF-3) complex.

It is found in the cytoplasm. Functionally, mRNA cap-binding component of the eukaryotic translation initiation factor 3 (eIF-3) complex, which is involved in protein synthesis of a specialized repertoire of mRNAs and, together with other initiation factors, stimulates binding of mRNA and methionyl-tRNAi to the 40S ribosome. The eIF-3 complex specifically targets and initiates translation of a subset of mRNAs involved in cell proliferation. In the eIF-3 complex, eif3d specifically recognizes and binds the 7-methylguanosine cap of a subset of mRNAs. The chain is Eukaryotic translation initiation factor 3 subunit D from Bombyx mori (Silk moth).